The following is a 154-amino-acid chain: MLRLLLLPLFLFTLSMCMGQTFQYSRGWTNGKRSFNAASPLLTTGHLHRGSELGLSDLYDLQEWTSDRRLERCLSQLQRSLIARNCVPGSDFNANRVDPDPESSAHPRLGNINNENVLYSSANVPTRHRQSNELLEELSAAGGASAEPNVFGKH.

The N-terminal stretch at 1–19 is a signal peptide; it reads MLRLLLLPLFLFTLSMCMG. Q20 bears the Pyrrolidone carboxylic acid mark. An Asparagine amide modification is found at N30. The propeptide occupies 70–154; sequence LERCLSQLQR…SAEPNVFGKH (85 aa).

The protein belongs to the corazonin family. Expression is restricted to 24 neurons in the larval CNS (8 in the brain and 16 in the ventral nerve cord) and 12-16 neurons in the pars lateralis of the adult brain.

It is found in the secreted. Cardioactive peptide. Corazonin is probably involved in the physiological regulation of the heart beat. Clock (Clk) and cycle (cyc) proteins negatively regulate Crz transcription in a cell-specific manner. The polypeptide is Pro-corazonin (Crz) (Drosophila erecta (Fruit fly)).